The sequence spans 449 residues: POU domain, class 3, transcription factor 1 (449 aa).

Disordered regions lie at residues 1–22, 76–108, 132–152, 184–251, and 393–449; these read MATT…TGPL, GGGG…GGGG, AHHL…HQPQ, GLHH…PSSD, and KRMT…GSVQ. 2 stretches are compositionally biased toward gly residues: residues 11-20 and 93-108; these read GPGGGAGGTG and AGGG…GGGG. The segment covering 132-143 has biased composition (low complexity); the sequence is AHHLGPAMSPSP. A compositionally biased stretch (basic and acidic residues) spans 188–197; it reads ALHEDGHEAQ. Low complexity predominate over residues 218–230; the sequence is AGGLHAAAAHLHP. Residues 245–319 form the POU-specific domain; sequence EDAPSSDDLE…LLNKWLEETD (75 aa). Residues 337–396 constitute a DNA-binding region (homeobox); that stretch reads KRKKRTSIEVGVKGALESHFLKCPKPSAHEITGLADSLQLEKEVVRVWFCNRRQKEKRMT. The span at 425–434 shows a compositional bias: pro residues; the sequence is PSAPPPPPPA.

This sequence belongs to the POU transcription factor family. Class-3 subfamily.

It is found in the nucleus. Transcription factor that binds to the octamer motif (5'-ATTTGCAT-3'). Acts as a transcriptional activator when binding cooperatively with SOX4, SOX11, or SOX12 to gene promoters. Acts as a transcriptional repressor of myelin-specific genes. The polypeptide is POU domain, class 3, transcription factor 1 (Pou3f1) (Mus musculus (Mouse)).